A 368-amino-acid polypeptide reads, in one-letter code: Peptide chain release factor 2 (368 aa).

Gln250 bears the N5-methylglutamine mark.

This sequence belongs to the prokaryotic/mitochondrial release factor family. Post-translationally, methylated by PrmC. Methylation increases the termination efficiency of RF2.

It localises to the cytoplasm. In terms of biological role, peptide chain release factor 2 directs the termination of translation in response to the peptide chain termination codons UGA and UAA. This is Peptide chain release factor 2 from Chlamydia abortus (strain DSM 27085 / S26/3) (Chlamydophila abortus).